The following is a 213-amino-acid chain: GTP cyclohydrolase 1 (213 aa).

Cys104, His107, and Cys175 together coordinate Zn(2+).

Belongs to the GTP cyclohydrolase I family. Toroid-shaped homodecamer, composed of two pentamers of five dimers.

The enzyme catalyses GTP + H2O = 7,8-dihydroneopterin 3'-triphosphate + formate + H(+). It functions in the pathway cofactor biosynthesis; 7,8-dihydroneopterin triphosphate biosynthesis; 7,8-dihydroneopterin triphosphate from GTP: step 1/1. The sequence is that of GTP cyclohydrolase 1 from Brucella anthropi (strain ATCC 49188 / DSM 6882 / CCUG 24695 / JCM 21032 / LMG 3331 / NBRC 15819 / NCTC 12168 / Alc 37) (Ochrobactrum anthropi).